The primary structure comprises 683 residues: DNA ligase (683 aa).

Residues 35–39, 84–85, and Glu-115 each bind NAD(+); these read DADYD and SL. The active-site N6-AMP-lysine intermediate is Lys-117. NAD(+) contacts are provided by Arg-138, Glu-175, Lys-293, and Lys-317. Residues Cys-411, Cys-414, Cys-429, and Cys-435 each contribute to the Zn(2+) site. In terms of domain architecture, BRCT spans 598 to 683; sequence QTNSAVSGKT…LQNISTGAQQ (86 aa).

The protein belongs to the NAD-dependent DNA ligase family. LigA subfamily. The cofactor is Mg(2+). Mn(2+) serves as cofactor.

The catalysed reaction is NAD(+) + (deoxyribonucleotide)n-3'-hydroxyl + 5'-phospho-(deoxyribonucleotide)m = (deoxyribonucleotide)n+m + AMP + beta-nicotinamide D-nucleotide.. Its function is as follows. DNA ligase that catalyzes the formation of phosphodiester linkages between 5'-phosphoryl and 3'-hydroxyl groups in double-stranded DNA using NAD as a coenzyme and as the energy source for the reaction. It is essential for DNA replication and repair of damaged DNA. The sequence is that of DNA ligase from Nitrosomonas eutropha (strain DSM 101675 / C91 / Nm57).